Reading from the N-terminus, the 242-residue chain is Transcription factor TCP17 (242 aa).

The 59-residue stretch at 33-91 folds into the TCP domain; the sequence is GKDRHSKVCTVRGLRDRRIRLSVMTAIQVYDLQERLGLSQPSKVIDWLLEVAKNDVDLL.

Interacts with SPL. Expressed in cotyledons, particularly in the vascular region, in leaves, roots, stems, buds, flowers and siliques.

The protein resides in the nucleus. Plays a pivotal role in the control of morphogenesis of shoot organs by negatively regulating the expression of boundary-specific genes such as CUC genes, probably through the induction of miRNA (e.g. miR164). Participates in ovule development. This is Transcription factor TCP17 (TCP17) from Arabidopsis thaliana (Mouse-ear cress).